The chain runs to 243 residues: Lipid II isoglutaminyl synthase (glutamine-hydrolyzing) subunit GatD (243 aa).

A GATase cobBQ-type domain is found at 6-197 (IYHFMSDKLN…LHGPILPKNY (192 aa)). C94 acts as the Nucleophile in catalysis. R128 is a substrate binding site. H189 is an active-site residue.

It belongs to the CobB/CobQ family. GatD subfamily. As to quaternary structure, forms a heterodimer with MurT.

It carries out the reaction beta-D-GlcNAc-(1-&gt;4)-Mur2Ac(oyl-L-Ala-gamma-D-Glu-L-Lys-D-Ala-D-Ala)-di-trans,octa-cis-undecaprenyl diphosphate + L-glutamine + ATP + H2O = beta-D-GlcNAc-(1-&gt;4)-Mur2Ac(oyl-L-Ala-D-isoglutaminyl-L-Lys-D-Ala-D-Ala)-di-trans,octa-cis-undecaprenyl diphosphate + L-glutamate + ADP + phosphate + H(+). The catalysed reaction is L-glutamine + H2O = L-glutamate + NH4(+). The protein operates within cell wall biogenesis; peptidoglycan biosynthesis. Functionally, the lipid II isoglutaminyl synthase complex catalyzes the formation of alpha-D-isoglutamine in the cell wall lipid II stem peptide. The GatD subunit catalyzes the hydrolysis of glutamine to glutamate and ammonia. The resulting ammonia molecule is channeled to the active site of MurT. In Staphylococcus aureus (strain N315), this protein is Lipid II isoglutaminyl synthase (glutamine-hydrolyzing) subunit GatD.